The following is a 52-amino-acid chain: Large ribosomal subunit protein bL33 (52 aa).

It belongs to the bacterial ribosomal protein bL33 family.

This chain is Large ribosomal subunit protein bL33, found in Chlamydia trachomatis serovar A (strain ATCC VR-571B / DSM 19440 / HAR-13).